The chain runs to 23 residues: Large ribosomal subunit protein uL10 (23 aa).

This sequence belongs to the universal ribosomal protein uL10 family. In terms of assembly, part of the ribosomal stalk of the 50S ribosomal subunit. The N-terminus interacts with L11 and the large rRNA to form the base of the stalk. The C-terminus forms an elongated spine to which L12 dimers bind in a sequential fashion forming a multimeric L10(L12)X complex.

Forms part of the ribosomal stalk, playing a central role in the interaction of the ribosome with GTP-bound translation factors. The protein is Large ribosomal subunit protein uL10 (rplJ) of Klebsiella pneumoniae.